The following is a 498-amino-acid chain: Glutamyl-tRNA(Gln) amidotransferase subunit A (498 aa).

Catalysis depends on charge relay system residues K79 and S154. S178 serves as the catalytic Acyl-ester intermediate.

The protein belongs to the amidase family. GatA subfamily. As to quaternary structure, heterotrimer of A, B and C subunits.

The enzyme catalyses L-glutamyl-tRNA(Gln) + L-glutamine + ATP + H2O = L-glutaminyl-tRNA(Gln) + L-glutamate + ADP + phosphate + H(+). In terms of biological role, allows the formation of correctly charged Gln-tRNA(Gln) through the transamidation of misacylated Glu-tRNA(Gln) in organisms which lack glutaminyl-tRNA synthetase. The reaction takes place in the presence of glutamine and ATP through an activated gamma-phospho-Glu-tRNA(Gln). This chain is Glutamyl-tRNA(Gln) amidotransferase subunit A, found in Psychrobacter cryohalolentis (strain ATCC BAA-1226 / DSM 17306 / VKM B-2378 / K5).